A 459-amino-acid polypeptide reads, in one-letter code: Protein BTN1 (459 aa).

11 consecutive transmembrane segments (helical) span residues 37–57, 73–93, 102–122, 129–149, 167–187, 189–209, 240–260, 283–303, 325–342, 352–372, and 374–394; these read VSVVIAFWLFGLINNILYVLV, AVLLADVLPSFLTKLVAPYFI, IAVFVALSCAGMLVVAAAPVE, LLGVVLASLSSGGGELSFLGL, GAGLVGAGLYVVLTGWIGLGV, GSLLVGALLPSVMVVAFWGIL, VPAGAASAGLLAPGPSVAATA, ALFFPYMLPLLLVYVAEYTIN, YYPFYGFLYQLGVFISRS, LYLPSFLQVANLVLLTLHAVL, and FIPSVYLVFVVIFWEGLLGGA.

The protein belongs to the battenin family.

The protein resides in the vacuole membrane. In terms of biological role, involved in vacuolar transport and vacuole pH homeostasis. Also required for cytokinesis. This Chaetomium globosum (strain ATCC 6205 / CBS 148.51 / DSM 1962 / NBRC 6347 / NRRL 1970) (Soil fungus) protein is Protein BTN1 (BTN1).